Here is a 127-residue protein sequence, read N- to C-terminus: Multifunctional methyltransferase subunit trm112 (127 aa).

The TRM112 domain maps to 2 to 123 (KVMTLNFLTC…KNGVANFLLP (122 aa)).

It belongs to the TRM112 family. In terms of assembly, heterodimer of mtq2-rmt-1/trm112, forming the eRF1 methyltransferase. Rmt-1/trm112 is necessary for the solubility and activity of the catalytic subunit mtq2. Interacts with trm11; required for full tRNA methyltransferase activity. Interacts with bud23; required for full rRNA methyltransferase activity.

It localises to the cytoplasm. The protein localises to the nucleus. Acts as an activator of both rRNA/tRNA and protein methyltransferases. Together with methyltransferase mtq2, required for the methylation of eRF1 on 'Gln-182'. Together with methyltransferase trm11, required for the formation of 2-methylguanosine at position 10 (m2G10) in tRNA. Together with methyltransferase bud23, required for the formation of a 7-methylguanine in 18S rRNA. Involved in biogenesis of both 40S and 60S ribosomal subunits. The protein is Multifunctional methyltransferase subunit trm112 (rmt-1) of Neurospora crassa (strain ATCC 24698 / 74-OR23-1A / CBS 708.71 / DSM 1257 / FGSC 987).